The following is a 204-amino-acid chain: Holliday junction branch migration complex subunit RuvA (204 aa).

The domain I stretch occupies residues 1 to 64 (MIGRLRGILL…EDAQLLYGFN (64 aa)). Residues 65-143 (TVKERALFRE…GWGAGDLFTP (79 aa)) form a domain II region. The flexible linker stretch occupies residues 144–155 (FTDAAPTDSAAA). The tract at residues 156-204 (SSNSAEEEAVSALLALGYKPTQASKVVSQIAKPDMSSEQLIREALKSMV) is domain III.

Belongs to the RuvA family. As to quaternary structure, homotetramer. Forms an RuvA(8)-RuvB(12)-Holliday junction (HJ) complex. HJ DNA is sandwiched between 2 RuvA tetramers; dsDNA enters through RuvA and exits via RuvB. An RuvB hexamer assembles on each DNA strand where it exits the tetramer. Each RuvB hexamer is contacted by two RuvA subunits (via domain III) on 2 adjacent RuvB subunits; this complex drives branch migration. In the full resolvosome a probable DNA-RuvA(4)-RuvB(12)-RuvC(2) complex forms which resolves the HJ.

It localises to the cytoplasm. In terms of biological role, the RuvA-RuvB-RuvC complex processes Holliday junction (HJ) DNA during genetic recombination and DNA repair, while the RuvA-RuvB complex plays an important role in the rescue of blocked DNA replication forks via replication fork reversal (RFR). RuvA specifically binds to HJ cruciform DNA, conferring on it an open structure. The RuvB hexamer acts as an ATP-dependent pump, pulling dsDNA into and through the RuvAB complex. HJ branch migration allows RuvC to scan DNA until it finds its consensus sequence, where it cleaves and resolves the cruciform DNA. The protein is Holliday junction branch migration complex subunit RuvA of Vibrio parahaemolyticus serotype O3:K6 (strain RIMD 2210633).